The chain runs to 938 residues: Protein translocase subunit SecA (938 aa).

ATP-binding positions include Q90, 108–112, and D504; that span reads GEGKT.

Belongs to the SecA family. In terms of assembly, monomer and homodimer. Part of the essential Sec protein translocation apparatus which comprises SecA, SecYEG and auxiliary proteins SecDF. Other proteins may also be involved.

The protein localises to the cell inner membrane. Its subcellular location is the cellular thylakoid membrane. It is found in the cytoplasm. It catalyses the reaction ATP + H2O + cellular proteinSide 1 = ADP + phosphate + cellular proteinSide 2.. Functionally, part of the Sec protein translocase complex. Interacts with the SecYEG preprotein conducting channel. Has a central role in coupling the hydrolysis of ATP to the transfer of proteins into and across the cell membrane, serving as an ATP-driven molecular motor driving the stepwise translocation of polypeptide chains across the membrane. Probably participates in protein translocation into and across both the cytoplasmic and thylakoid membranes in cyanobacterial cells. This is Protein translocase subunit SecA from Microcystis aeruginosa (strain NIES-843 / IAM M-2473).